The primary structure comprises 301 residues: Haloalkane dehalogenase (301 aa).

Residue aspartate 123 is the Nucleophile of the active site. The active-site Proton donor is the aspartate 250. Histidine 279 acts as the Proton acceptor in catalysis.

It belongs to the haloalkane dehalogenase family. Type 1 subfamily. In terms of assembly, monomer.

The catalysed reaction is 1-haloalkane + H2O = a halide anion + a primary alcohol + H(+). Catalyzes hydrolytic cleavage of carbon-halogen bonds in halogenated aliphatic compounds, leading to the formation of the corresponding primary alcohols, halide ions and protons. The sequence is that of Haloalkane dehalogenase from Phenylobacterium zucineum (strain HLK1).